The sequence spans 29 residues: uncharacterized protein (29 aa).

The helical transmembrane segment at 7–27 threads the bilayer; sequence FSLVTTIIVLGLIVAVGLTAA.

It localises to the cell inner membrane. This is an uncharacterized protein from Escherichia coli O6:K15:H31 (strain 536 / UPEC).